Here is a 652-residue protein sequence, read N- to C-terminus: Nitrate reductase-like protein NarX (652 aa).

Residues 1–251 (MTVTPRTGSR…FGDQTDVPES (251 aa)) are nitrate reductase alpha subunit. Residues 53–117 (DKVVRSTHGV…AFSWYTYSPT (65 aa)) enclose the 4Fe-4S Mo/W bis-MGD-type domain. [4Fe-4S] cluster-binding residues include histidine 60, cysteine 64, cysteine 68, and cysteine 103. Residue aspartate 233 coordinates Mo-bis(molybdopterin guanine dinucleotide). Residues 258-415 (VWQCASVLLT…TVAAVCRTGD (158 aa)) are nitrate reductase delta subunit. A run of 5 helical transmembrane segments spans residues 416-436 (MMGE…VAVG), 466-486 (PMFH…LVIP), 504-524 (AVVL…LLIY), 545-565 (LVLV…SGVV), and 595-615 (APLY…LWPF). A nitrate reductase gamma subunit region spans residues 416–652 (MMGELFWTVV…VLTRPRRRGW (237 aa)). Residues histidine 469 and histidine 479 each contribute to the heme b site. Residues histidine 602 and histidine 620 each contribute to the heme b site.

In the N-terminal section; belongs to the nitrate reductase alpha subunit family. It in the central section; belongs to the NarJ/NarW family. The protein in the C-terminal section; belongs to the nitrate reductase gamma subunit family. [4Fe-4S] cluster serves as cofactor. Requires Mo-bis(molybdopterin guanine dinucleotide) as cofactor. It depends on heme b as a cofactor.

It localises to the cell membrane. Does not seem to have nitrate reductase activity. The sequence is that of Nitrate reductase-like protein NarX (narX) from Mycobacterium tuberculosis (strain CDC 1551 / Oshkosh).